The following is a 315-amino-acid chain: Ribosomal RNA small subunit methyltransferase H (315 aa).

S-adenosyl-L-methionine-binding positions include 33–35 (GGH), D52, F84, D106, and Q113. The tract at residues 295–315 (SDELEENNRSHSAKLRVAEKL) is disordered.

The protein belongs to the methyltransferase superfamily. RsmH family.

It localises to the cytoplasm. The enzyme catalyses cytidine(1402) in 16S rRNA + S-adenosyl-L-methionine = N(4)-methylcytidine(1402) in 16S rRNA + S-adenosyl-L-homocysteine + H(+). Its function is as follows. Specifically methylates the N4 position of cytidine in position 1402 (C1402) of 16S rRNA. This Lactobacillus gasseri (strain ATCC 33323 / DSM 20243 / BCRC 14619 / CIP 102991 / JCM 1131 / KCTC 3163 / NCIMB 11718 / NCTC 13722 / AM63) protein is Ribosomal RNA small subunit methyltransferase H.